A 136-amino-acid polypeptide reads, in one-letter code: ATP synthase epsilon chain (136 aa).

The disordered stretch occupies residues 100–120; that stretch reads QGALEEANRGEDKPNQLKASN. Positions 105 to 114 are enriched in basic and acidic residues; the sequence is EANRGEDKPN.

This sequence belongs to the ATPase epsilon chain family. In terms of assembly, F-type ATPases have 2 components, CF(1) - the catalytic core - and CF(0) - the membrane proton channel. CF(1) has five subunits: alpha(3), beta(3), gamma(1), delta(1), epsilon(1). CF(0) has three main subunits: a, b and c.

Its subcellular location is the cellular thylakoid membrane. Functionally, produces ATP from ADP in the presence of a proton gradient across the membrane. The chain is ATP synthase epsilon chain (atpC) from Synechocystis sp. (strain ATCC 27184 / PCC 6803 / Kazusa).